The sequence spans 285 residues: Bifunctional protein FolD (285 aa).

NADP(+) contacts are provided by residues 164–166, serine 189, and isoleucine 230; that span reads GRS.

Belongs to the tetrahydrofolate dehydrogenase/cyclohydrolase family. In terms of assembly, homodimer.

It carries out the reaction (6R)-5,10-methylene-5,6,7,8-tetrahydrofolate + NADP(+) = (6R)-5,10-methenyltetrahydrofolate + NADPH. The catalysed reaction is (6R)-5,10-methenyltetrahydrofolate + H2O = (6R)-10-formyltetrahydrofolate + H(+). It functions in the pathway one-carbon metabolism; tetrahydrofolate interconversion. Its function is as follows. Catalyzes the oxidation of 5,10-methylenetetrahydrofolate to 5,10-methenyltetrahydrofolate and then the hydrolysis of 5,10-methenyltetrahydrofolate to 10-formyltetrahydrofolate. This Oceanobacillus iheyensis (strain DSM 14371 / CIP 107618 / JCM 11309 / KCTC 3954 / HTE831) protein is Bifunctional protein FolD.